Reading from the N-terminus, the 148-residue chain is Large ribosomal subunit protein bL9 (148 aa).

This sequence belongs to the bacterial ribosomal protein bL9 family.

Binds to the 23S rRNA. The polypeptide is Large ribosomal subunit protein bL9 (Dechloromonas aromatica (strain RCB)).